A 186-amino-acid polypeptide reads, in one-letter code: Alpha/beta-gliadin clone PTO-A10 (186 aa).

Residues 1 to 20 (PQPQPQYSQPQQPISQQQQQ) are disordered.

This sequence belongs to the gliadin/glutenin family. Substrate of transglutaminase.

Functionally, gliadin is the major seed storage protein in wheat. In Triticum aestivum (Wheat), this protein is Alpha/beta-gliadin clone PTO-A10.